The chain runs to 469 residues: DNA-binding transcriptional regulator NtrC (469 aa).

Positions 5 to 119 (IVWVVDDDSS…EAVALVERAI (115 aa)) constitute a Response regulatory domain. Asp54 is subject to 4-aspartylphosphate. Residues 140–369 (IIGEAPAMQD…LENTCRWLTV (230 aa)) form the Sigma-54 factor interaction domain. Residues 168-175 (GESGTGKE) and 231-240 (ADGGTLFLDE) each bind ATP. The H-T-H motif DNA-binding region spans 445-464 (KQEAARLLGWGRNTLTRKLK).

Post-translationally, phosphorylated and dephosphorylated by NtrB.

The protein localises to the cytoplasm. Its function is as follows. Member of the two-component regulatory system NtrB/NtrC, which controls expression of the nitrogen-regulated (ntr) genes in response to nitrogen limitation. Phosphorylated NtrC binds directly to DNA and stimulates the formation of open promoter-sigma54-RNA polymerase complexes. This chain is DNA-binding transcriptional regulator NtrC (glnG), found in Escherichia coli O157:H7.